A 231-amino-acid chain; its full sequence is Aldehyde decarbonylase (231 aa).

5 residues coordinate Fe cation: E32, E60, H63, E115, and H147.

This sequence belongs to the aldehyde decarbonylase family. Binds 2 metal cations per subunit. The catalytic dinuclear metal-binding site could be either a di-iron or a manganese-iron cofactor. is required as a cofactor.

The enzyme catalyses a long-chain fatty aldehyde + 2 NADPH + O2 + H(+) = a long-chain alkane + formate + 2 NADP(+) + H2O. Catalyzes the decarbonylation of fatty aldehydes to alkanes. Requires the presence of ferredoxin, ferredoxin reductase and NADPH for in vitro decarbonylase activity. Involved in the biosynthesis of alkanes, mainly heptadecane and pentadecane. This chain is Aldehyde decarbonylase, found in Synechococcus elongatus (strain ATCC 33912 / PCC 7942 / FACHB-805) (Anacystis nidulans R2).